A 765-amino-acid polypeptide reads, in one-letter code: Spastin (765 aa).

The segment at 1–94 is disordered; sequence MVRTKNQSSS…TSGYGPRGGT (94 aa). The Cytoplasmic segment spans residues 1–107; that stretch reads MVRTKNQSSS…KQNLYVVSFP (107 aa). A required for localization to punctate cytoplasmic foci region spans residues 1–195; it reads MVRTKNQSSS…ALLPLEMATN (195 aa). Residues 8-19 show a composition bias toward low complexity; the sequence is SSSSSASSSTKS. Positions 48–58 are enriched in polar residues; the sequence is SSKLSSNRQRA. Residues 59–72 are compositionally biased toward low complexity; sequence TITTTTTSTTPGSS. Residues 108 to 128 constitute an intramembrane region (helical); the sequence is IIFLFNVLRSLIYQLFCIFRY. The Cytoplasmic segment spans residues 129-765; sequence LYCASTKVIY…WSQDYGDITI (637 aa). Positions 193–765 are sufficient for interaction with microtubules and microtubule severing; sequence ATNRGGSGGY…WSQDYGDITI (573 aa). The MIT domain maps to 218–293; it reads HRRAFEYISK…SMARDRLHFL (76 aa). Residues 329–462 form a disordered region; that stretch reads QTNSKAAAVE…GSGSGASTPM (134 aa). The segment covering 355–364 has biased composition (low complexity); sequence SGTGSSAGTS. Polar residues-rich tracts occupy residues 389-407 and 428-444; these read NKSQ…STSV and QFSS…RTPI. Residues 446–462 are required for interaction with microtubules; sequence NNAASGSGSGSGASTPM. 530 to 537 is a binding site for ATP; it reads GPPGNGKT.

It belongs to the AAA ATPase family. Spastin subfamily. Homohexamer. The homohexamer is stabilized by ATP-binding. The homohexamer may adopt a ring conformation through which microtubules pass prior to being severed. Interacts with microtubules. Interacts with atl; may be involved in microtubule dynamics.

The protein resides in the membrane. It localises to the cytoplasm. Its subcellular location is the cytoskeleton. It is found in the microtubule organizing center. The protein localises to the centrosome. The protein resides in the chromosome. It localises to the lipid droplet. The enzyme catalyses n ATP + n H2O + a microtubule = n ADP + n phosphate + (n+1) alpha/beta tubulin heterodimers.. Functionally, ATP-dependent microtubule severing protein. Stimulates microtubule minus-end depolymerization and poleward microtubule flux in the mitotic spindle. Regulates microtubule stability in the neuromuscular junction synapse. Involved in lipid metabolism by regulating the size and distribution of lipid droplets. Involved in axon regeneration by regulating microtubule severing. The chain is Spastin from Drosophila mojavensis (Fruit fly).